Reading from the N-terminus, the 336-residue chain is MLRAGWLRGAAALALLLAARVVAAFEPITVGLAIGAASAITGYLSYNDIYCRFAECCREERPLNASALKLDLEEKLFGQHLATEVIFKALTGFRNNKNPKKPLTLSLHGWAGTGKNFVSQIVAENLHPKGLKSNFVHLFVSTLHFPHEQKIKLYQDQLQKWIRGNVSACANSVFIFDEMDKLHPGIIDAIKPFLDYYEQVDGVSYRKAIFIFLSNAGGDLITKTALDFWRAGRKREDIQLKDLEPVLSVGVFNNKHSGLWHSGLIDKNLIDYFIPFLPLEYRHVKMCVRAEMRARGSAIDEDIVTRVAEEMTFFPRDEKIYSDKGCKTVQSRLDFH.

Residues 1–24 form the signal peptide; sequence MLRAGWLRGAAALALLLAARVVAA. The N-linked (GlcNAc...) asparagine glycan is linked to asparagine 64. 109 to 116 is an ATP binding site; that stretch reads GWAGTGKN. The N-linked (GlcNAc...) asparagine glycan is linked to asparagine 165.

It belongs to the ClpA/ClpB family. Torsin subfamily. Homohexamer. Interacts with TOR1A; the interaction may be specific of neural tissues. Interacts with TOR1AIP1; TOR1AIP1 is required for TOR1B location on the nuclear membrane. Interacts (ATP-bound) with TOR1AIP2; important for endoplasmic reticulum integrity. Post-translationally, N-glycosylated. In terms of tissue distribution, widely expressed with low levels in brain.

It is found in the endoplasmic reticulum lumen. The protein resides in the nucleus membrane. The enzyme catalyses ATP + H2O = ADP + phosphate + H(+). May serve as a molecular chaperone assisting in the proper folding of secreted and/or membrane proteins. Plays a role in non-neural cells nuclear envelope and endoplasmic reticulum integrity. May have a redundant function with TOR1A in non-neural tissues. This Homo sapiens (Human) protein is Torsin-1B (TOR1B).